A 301-amino-acid chain; its full sequence is Runt-related transcription factor rnt-1 (301 aa).

A Runt domain is found at 10–138; that stretch reads NFIEQQPAPA…TVDGPRDARI (129 aa). Interaction with DNA regions lie at residues 40–44, 95–103, and 128–137; these read RSNKS, RFVGRSGRG, and VTVDGPRDAR. Chloride is bound by residues arginine 99 and valine 130. The segment at 237-301 is disordered; the sequence is PSIFITPTSD…SSSPTIWRPF (65 aa). Serine 255 is subject to Phosphoserine. Over residues 255 to 276 the composition is skewed to polar residues; sequence SPRSITKSSETSINLIQETPES. Residues 285 to 301 show a composition bias toward low complexity; that stretch reads VSITSSNSSSPTIWRPF.

As to quaternary structure, interacts with CBFbeta homolog bro-1; acts to increase the affinity and specificity of interaction of rnt-1 with DNA. Interacts with TGF-beta pathway protein sma-4. Post-translationally, may be ubiquitinated in order to be targeted for proteasome-mediated degradation in intestinal cells. In terms of processing, may be phosphorylated by members of the p38 MAP kinase pathway. As to expression, expressed in the intestine.

Its subcellular location is the nucleus. Transcription factor. Binds to regulatory DNA sequences in order to modulate transcription; negatively autoregulates its own expression, perhaps dependent upon CBF beta homolog bro-1. Promotes proliferation, and prevents differentiation, of seam cells, a stem cell-like lineage, acting in concert with bro-1. Required for controlling cell proliferation in the seam cells, perhaps by repressing expression of cyclin-dependent kinase inhibitor cki-1. Inhibition of seam cell differentiation is regulated by rnt-1 and bro-1, perhaps acting upstream of pop-1, by antagonizing pop-1 repressor function. Required for asymmetrical cell divisions in the lineage derived from a posterior embryonic seam cell, the T blast cell, and for asymmetric expression of zinc finger protein tlp-1. Regulates growth and male tail development. Involved in the oxidative stress response, perhaps downstream of the p38 MAP kinase pathway, and acting as part of a negative feedback loop via a transcriptional target gene, tyrosine-protein phosphatase vhp-1. Positively modulates dopaminergic signaling in a non-cell autonomous manner. May be involved in TGF-beta signaling. The chain is Runt-related transcription factor rnt-1 from Caenorhabditis elegans.